We begin with the raw amino-acid sequence, 646 residues long: bZIP transcription factor 39 (646 aa).

Residues 1 to 311 (MAEPALLDPT…KSKSKTKTKK (311 aa)) lie on the Cytoplasmic side of the membrane. The interval 25-172 (HELPLAGGGG…GGTVCEEEED (148 aa)) is disordered. A compositionally biased stretch (low complexity) spans 43–53 (LDGLEFDLPGD). The segment covering 59–69 (FLLRSPERDDS) has biased composition (basic and acidic residues). Residues 71–98 (EGSAAGSGPTASPSSSPTTSASNSAVAN) show a composition bias toward low complexity. A compositionally biased stretch (basic and acidic residues) spans 103–113 (EVKHEESDEGR). Over residues 159 to 172 (DSDEGGTVCEEEED) the composition is skewed to acidic residues. One can recognise a bZIP domain in the interval 172–232 (DERRAARLMR…AENATLRQQL (61 aa)). The basic motif stretch occupies residues 174-205 (RRAARLMRNRESAQLSRQRKKRYVEELEEKVK). Positions 211–218 (INDLNSRI) are leucine-zipper. The tract at residues 272 to 308 (LVPIPRLKPQQPVPSSKVVKKPESKKTVENKSKSKTK) is disordered. The segment covering 279–288 (KPQQPVPSSK) has biased composition (low complexity). Positions 291-303 (KKPESKKTVENKS) are enriched in basic and acidic residues. The helical transmembrane segment at 312–332 (VASVSLLGLLLIMLVFGAFIP) threads the bilayer. At 333–646 (GFNHNFGMCG…FKSSSPHLVN (314 aa)) the chain is on the lumenal side. N-linked (GlcNAc...) asparagine glycosylation is found at Asn-371, Asn-399, Asn-525, Asn-530, Asn-565, and Asn-571. Residues 560-585 (TGKTANNTEPFNRTSESSSKLPDSKP) form a disordered region. Residues 562–585 (KTANNTEPFNRTSESSSKLPDSKP) show a composition bias toward polar residues.

This sequence belongs to the bZIP family. In terms of tissue distribution, highly expressed in leaf blade, and at lower levels in roots, leaf sheaths, flowers and seeds.

It is found in the endoplasmic reticulum membrane. It localises to the nucleus. In terms of biological role, transcription factor involved in endoplasmic reticulum (ER) stress response. Acts as a ER stress sensor and activates the transcription factor BZIP50 and the chaperone BIP1. The protein is bZIP transcription factor 39 of Oryza sativa subsp. japonica (Rice).